A 542-amino-acid polypeptide reads, in one-letter code: Sialate O-acetylesterase (542 aa).

The first 23 residues, 1–23 (MVSPRPVGLMLLLIIARVSRGAG), serve as a signal peptide directing secretion. N-linked (GlcNAc...) asparagine glycans are attached at residues N107, N138, N188, N294, N357, N428, N449, and N463.

In terms of assembly, disulfide-linked heterodimer of a small subunit and a large subunit. Post-translationally, the two subunits are derived from a single precursor by proteolytic cleavage. Glycosylated. Widely expressed.

The protein resides in the lysosome. It catalyses the reaction N-acetyl-9-O-acetylneuraminate + H2O = N-acetylneuraminate + acetate + H(+). The enzyme catalyses an Ac-O-9-sialoglycoconjugate + H2O = a sialoglycoconjugate + acetate + H(+). Its activity is regulated as follows. Inhibited by diisopropyl fluorophosphate and diethyl-P-nitrophenyl phosphate. Functionally, catalyzes the removal of O-acetyl ester groups from position 9 of the free diacetylated sialate N-acetyl-9-O-acetylneuraminate (Neu5,9Ac2) in the cytosol and of the diacetylated sialate residues of sialylglycoconjugates in the lysosomes. Together with the sialate-O-acetyltransferase they regulate the balance of acetylated sialoglycoconjugates, key players in various processes such as cell-cell interactions, host-pathogen recognition, and tumor antigenicity. The chain is Sialate O-acetylesterase (Siae) from Rattus norvegicus (Rat).